Reading from the N-terminus, the 416-residue chain is Antigen EG13 (416 aa).

Residues 1-247 enclose the F-BAR domain; it reads MIQERADIEK…TVAKVDADAD (247 aa). Residues 297 to 327 form a disordered region; that stretch reads LKTFTSPDRGGPIPGTTDSGSNISTSPVHTT. Residues 312-327 are compositionally biased toward polar residues; it reads TTDSGSNISTSPVHTT. Residues 361–416 enclose the SH3 domain; it reads RPGVPIRALYDYVGVEADELSFNSGDLFEKLEDEDEQGWCKGRKDGRVGLYPRQLR.

In Echinococcus granulosus (Hydatid tapeworm), this protein is Antigen EG13 (EG13).